A 278-amino-acid polypeptide reads, in one-letter code: MNILLATASFVLSLGFVKAEPTRHHDRYAYIERVVCDVNFPDLLCRRKSHAIAYRMFRLIPVRNPNYEISTDYVSHEFNTTRVRSESEKYLCSSYGPNGYVSGDVFILRNALNKLFDHHEIEELAYELFIRLVASFLDSCSYPKSFEHNLVRCRSEDEELCTSPLAAFIKLVSRRSTRDVVLIVLNDFSHYLKLEEGHGFSKDRKSNQCVKFTQLYFYYLSAAVNFIERKISAFTLIPVMDDRRIASVSAIMISSKFANTTGNYVINATSFMDNTIPF.

An N-terminal signal peptide occupies residues 1–19 (MNILLATASFVLSLGFVKA). N-linked (GlcNAc...) asparagine glycans are attached at residues N79, N259, and N267.

The protein resides in the spore wall. This Nosema bombycis (strain CQ1 / CVCC 102059) (Microsporidian parasite) protein is Spore wall protein 30 (SWP30).